A 173-amino-acid polypeptide reads, in one-letter code: CASP-like protein 3A1 (173 aa).

A topological domain (cytoplasmic) is located at residue Met-1. Residues 2–22 (VDIALRSAVVAFMVVSLSAMF) traverse the membrane as a helical segment. Residues 23-48 (TSTQHSEVHIIGFSIPVSLRWNRSQP) lie on the Extracellular side of the membrane. Residue Asn-44 is glycosylated (N-linked (GlcNAc...) asparagine). Residues 49 to 69 (FEFLVVVELLICAYAFVQFVY) form a helical membrane-spanning segment. Residues 70 to 84 (QSVVLAKNAVPTRRC) lie on the Cytoplasmic side of the membrane. Residues 85–105 (IWVQLAADQVCAYLVLAAAAA) form a helical membrane-spanning segment. Topologically, residues 106–140 (AAGASRTNKSGFQSLGMQNIKVPGVCIVLDKFCNR) are extracellular. Asn-113 carries an N-linked (GlcNAc...) asparagine glycan. The helical transmembrane segment at 141–161 (ATIAIIFTLLAAGASGISVTL) threads the bilayer. Over 162 to 173 (DVYMLTLTYYMG) the chain is Cytoplasmic.

The protein belongs to the Casparian strip membrane proteins (CASP) family. Homodimer and heterodimers.

The protein resides in the cell membrane. The chain is CASP-like protein 3A1 from Pteridium aquilinum subsp. aquilinum (Bracken fern).